Reading from the N-terminus, the 442-residue chain is tRNA modification GTPase MnmE (442 aa).

Positions 27, 84, and 124 each coordinate (6S)-5-formyl-5,6,7,8-tetrahydrofolate. One can recognise a TrmE-type G domain in the interval 221–366 (GLHVVIVGAP…LLDALQAFAE (146 aa)). GTP is bound by residues 231 to 236 (NAGKSS), 250 to 256 (SEEAGTT), and 275 to 278 (DTAG). Positions 235 and 256 each coordinate Mg(2+). Lysine 442 serves as a coordination point for (6S)-5-formyl-5,6,7,8-tetrahydrofolate.

This sequence belongs to the TRAFAC class TrmE-Era-EngA-EngB-Septin-like GTPase superfamily. TrmE GTPase family. In terms of assembly, homodimer. Heterotetramer of two MnmE and two MnmG subunits. K(+) is required as a cofactor.

It localises to the cytoplasm. In terms of biological role, exhibits a very high intrinsic GTPase hydrolysis rate. Involved in the addition of a carboxymethylaminomethyl (cmnm) group at the wobble position (U34) of certain tRNAs, forming tRNA-cmnm(5)s(2)U34. The chain is tRNA modification GTPase MnmE from Brucella ovis (strain ATCC 25840 / 63/290 / NCTC 10512).